We begin with the raw amino-acid sequence, 476 residues long: Protein EARLY HEADING DATE 2 (476 aa).

Polar residues predominate over residues 1 to 13 (MLLSDLSSDQEAT). A disordered region spans residues 1–27 (MLLSDLSSDQEATGSNSHGGGGGGDRM). C2H2-type zinc fingers lie at residues 106–128 (FVCEVCNKGFQRDQNLQLHRRGH) and 156–186 (YVCPEPTCVHHDPARALGDLTGIKKHFSRKH). 2 consecutive short sequence motifs (nuclear localization signal) follow at residues 124–131 (HRRGHNLP) and 178–185 (IKKHFSRK). The segment at 191–214 (WRCERCGKRYAVHSDWKAHVKNCG) adopts a C2H2-type 2; degenerate zinc-finger fold. Zn(2+) contacts are provided by C193, C196, H209, C213, C220, C222, H235, and C239. Residues 218-241 (YRCDCGILFSRKDSLLTHRAFCDA) form a CCHC-type 2; atypical zinc finger. Residues 228–240 (RKDSLLTHRAFCD) form an SHR-binding region.

The protein resides in the nucleus. Transcription activator that acts as a flowering master switch in both long and short days, independently of the circadian clock. Promotes flowering upstream of HD1 by up-regulating FTL1, FTL4, FTL5, FTL6, EHD1, HD3A and RFT1. Seems to repress FTL11 expression. May recognize the consensus motif 5'-TTTGTCGTAAT-3' in target gene promoters. This Oryza sativa subsp. indica (Rice) protein is Protein EARLY HEADING DATE 2.